The primary structure comprises 489 residues: L-arabinose isomerase (489 aa).

Residues Glu-300, Glu-325, His-342, and His-441 each coordinate Mn(2+).

Belongs to the arabinose isomerase family. The cofactor is Mn(2+).

It catalyses the reaction beta-L-arabinopyranose = L-ribulose. It participates in carbohydrate degradation; L-arabinose degradation via L-ribulose; D-xylulose 5-phosphate from L-arabinose (bacterial route): step 1/3. Catalyzes the conversion of L-arabinose to L-ribulose. This Clostridium beijerinckii (strain ATCC 51743 / NCIMB 8052) (Clostridium acetobutylicum) protein is L-arabinose isomerase.